Consider the following 197-residue polypeptide: Putative WUSCHEL-related homeobox 10 (197 aa).

A DNA-binding region (homeobox; WUS-type) is located at residues 75-139 (STRPRWTPTT…NRRARSKRKQ (65 aa)). The tract at residues 132–168 (RARSKRKQPPTTTITSSQADDAAVTTTEERGRCGDDS) is disordered. Over residues 140-150 (PPTTTITSSQA) the composition is skewed to polar residues.

It belongs to the WUS homeobox family.

Its subcellular location is the nucleus. Functionally, potential transcription factor that plays a central role during developmental processes. The polypeptide is Putative WUSCHEL-related homeobox 10 (WOX10) (Arabidopsis thaliana (Mouse-ear cress)).